A 283-amino-acid polypeptide reads, in one-letter code: Adenylate kinase 2, chloroplastic (283 aa).

Residues 1–59 constitute a chloroplast transit peptide; it reads MTGCVNSISPPPVTLYRHRASPSRSSFSLSGDALHSLYRHRRVSRSPSIIAPKFQIVAA. 74–79 provides a ligand contact to ATP; it reads ASGKGT. The NMP stretch occupies residues 94 to 123; sequence SAGDLLRAEIASGSENGRRAKEHMEKGQLV. Residues Arg-100, 121 to 123, 150 to 153, and Gln-157 contribute to the AMP site; these read QLV and GYPR. The tract at residues 187-220 is LID; the sequence is GRRLDPVTGKIYHLKYSPPETEEIAVRLTQRFDD. An ATP-binding site is contributed by Arg-188. Residues Arg-217 and Arg-228 each contribute to the AMP site.

This sequence belongs to the adenylate kinase family. As to quaternary structure, monomer.

The protein localises to the plastid. It localises to the chloroplast stroma. The catalysed reaction is AMP + ATP = 2 ADP. Functionally, catalyzes the reversible transfer of the terminal phosphate group between ATP and AMP. Plays an important role in cellular energy homeostasis and in adenine nucleotide metabolism. Plays a major role in the equilibration of adenylates and de novo synthesis of ADP in the plastid stroma. This chain is Adenylate kinase 2, chloroplastic, found in Arabidopsis thaliana (Mouse-ear cress).